A 279-amino-acid polypeptide reads, in one-letter code: uncharacterized protein (279 aa).

This is an uncharacterized protein from Acanthamoeba polyphaga (Amoeba).